Consider the following 93-residue polypeptide: Cobalt transport protein CbiN (93 aa).

The next 2 helical transmembrane spans lie at 5-25 and 63-83; these read LMLL…NHGG and LLFT…LGYC.

It belongs to the CbiN family. Forms an energy-coupling factor (ECF) transporter complex composed of an ATP-binding protein (A component, CbiO), a transmembrane protein (T component, CbiQ) and 2 possible substrate-capture proteins (S components, CbiM and CbiN) of unknown stoichimetry.

It localises to the cell inner membrane. It participates in cofactor biosynthesis; adenosylcobalamin biosynthesis. Part of the energy-coupling factor (ECF) transporter complex CbiMNOQ involved in cobalt import. This Salmonella agona (strain SL483) protein is Cobalt transport protein CbiN.